A 247-amino-acid chain; its full sequence is Mast cell protease 8 (247 aa).

The first 19 residues, 1 to 19 (MFLLLVLLVAALPVNAEGG), serve as a signal peptide directing secretion. Position 20 (Glu20) is a propeptide, activation peptide. Positions 21–242 (IIWGTESKPH…FMPWIRKTMK (222 aa)) constitute a Peptidase S1 domain. N-linked (GlcNAc...) asparagine glycosylation is present at Asn41. Cys49 and Cys65 are oxidised to a cystine. Catalysis depends on His64, which acts as the Charge relay system. N-linked (GlcNAc...) asparagine glycans are attached at residues Asn71 and Asn101. The active-site Charge relay system is the Asp107. 2 disulfide bridges follow: Cys141–Cys206 and Cys171–Cys185. Residues Asn151 and Asn179 are each glycosylated (N-linked (GlcNAc...) asparagine). Ser200 (charge relay system) is an active-site residue.

This sequence belongs to the peptidase S1 family. Granzyme subfamily.

It localises to the secreted. Its subcellular location is the cytoplasmic granule. This is Mast cell protease 8 (Mcpt8) from Mus musculus (Mouse).